The chain runs to 445 residues: Putative ankyrin repeat protein L797 (445 aa).

ANK repeat units lie at residues 73 to 102 (FMED…DIYS), 285 to 314 (NHEH…ELVG), 315 to 344 (NLYI…DIRQ), and 346 to 375 (LDAF…IINI).

The chain is Putative ankyrin repeat protein L797 from Acanthamoeba polyphaga (Amoeba).